We begin with the raw amino-acid sequence, 102 residues long: Large ribosomal subunit protein bL21 (102 aa).

This sequence belongs to the bacterial ribosomal protein bL21 family. In terms of assembly, part of the 50S ribosomal subunit. Contacts protein L20.

Functionally, this protein binds to 23S rRNA in the presence of protein L20. The chain is Large ribosomal subunit protein bL21 from Geobacter sp. (strain M21).